A 297-amino-acid chain; its full sequence is Probable endonuclease 4 (297 aa).

Residues His69, His110, Glu145, Asp179, His182, His214, Asp227, His229, and Glu259 each coordinate Zn(2+).

Belongs to the AP endonuclease 2 family. Zn(2+) is required as a cofactor.

It carries out the reaction Endonucleolytic cleavage to 5'-phosphooligonucleotide end-products.. Endonuclease IV plays a role in DNA repair. It cleaves phosphodiester bonds at apurinic or apyrimidinic (AP) sites, generating a 3'-hydroxyl group and a 5'-terminal sugar phosphate. In Bacillus subtilis (strain 168), this protein is Probable endonuclease 4.